The primary structure comprises 155 residues: SsrA-binding protein (155 aa).

This sequence belongs to the SmpB family.

Its subcellular location is the cytoplasm. Functionally, required for rescue of stalled ribosomes mediated by trans-translation. Binds to transfer-messenger RNA (tmRNA), required for stable association of tmRNA with ribosomes. tmRNA and SmpB together mimic tRNA shape, replacing the anticodon stem-loop with SmpB. tmRNA is encoded by the ssrA gene; the 2 termini fold to resemble tRNA(Ala) and it encodes a 'tag peptide', a short internal open reading frame. During trans-translation Ala-aminoacylated tmRNA acts like a tRNA, entering the A-site of stalled ribosomes, displacing the stalled mRNA. The ribosome then switches to translate the ORF on the tmRNA; the nascent peptide is terminated with the 'tag peptide' encoded by the tmRNA and targeted for degradation. The ribosome is freed to recommence translation, which seems to be the essential function of trans-translation. The protein is SsrA-binding protein of Bacillus cereus (strain G9842).